We begin with the raw amino-acid sequence, 421 residues long: Testin (421 aa).

The PET domain maps to 92–199 (MILTNPVAAK…GDVKLPCEMD (108 aa)). LIM zinc-binding domains follow at residues 234–297 (YSCY…CDSE), 299–359 (PRCA…NHAV), and 362–421 (QGCH…KRMS).

It belongs to the prickle / espinas / testin family. Interacts via LIM domain 1 with ZYX. Interacts (via LIM domain 3) with ENAH and VASP. Interacts with ALKBH4, talin, actin, alpha-actinin, GRIP1 and PXN. Interacts (via LIM domain 2) with ACTL7A (via N-terminus). Heterodimer with ACTL7A; the heterodimer interacts with ENAH to form a heterotrimer.

It is found in the cytoplasm. It localises to the cell junction. The protein localises to the focal adhesion. Its function is as follows. Scaffold protein that may play a role in cell adhesion, cell spreading and in the reorganization of the actin cytoskeleton. Plays a role in the regulation of cell proliferation. May act as a tumor suppressor. The protein is Testin (TES) of Nomascus leucogenys (Northern white-cheeked gibbon).